The chain runs to 679 residues: Glycine--tRNA ligase beta subunit (679 aa).

It belongs to the class-II aminoacyl-tRNA synthetase family. Tetramer of two alpha and two beta subunits.

It localises to the cytoplasm. The catalysed reaction is tRNA(Gly) + glycine + ATP = glycyl-tRNA(Gly) + AMP + diphosphate. This chain is Glycine--tRNA ligase beta subunit, found in Thermodesulfovibrio yellowstonii (strain ATCC 51303 / DSM 11347 / YP87).